A 475-amino-acid polypeptide reads, in one-letter code: Ribulose bisphosphate carboxylase large chain (475 aa).

Substrate is bound by residues asparagine 123 and threonine 173. Lysine 175 serves as the catalytic Proton acceptor. Lysine 177 provides a ligand contact to substrate. Mg(2+)-binding residues include lysine 201, aspartate 203, and glutamate 204. N6-carboxylysine is present on lysine 201. Histidine 294 acts as the Proton acceptor in catalysis. Residues arginine 295, histidine 327, and serine 379 each contribute to the substrate site.

It belongs to the RuBisCO large chain family. Type I subfamily. Heterohexadecamer of 8 large chains and 8 small chains; disulfide-linked. The disulfide link is formed within the large subunit homodimers. The cofactor is Mg(2+). In terms of processing, the disulfide bond which can form in the large chain dimeric partners within the hexadecamer appears to be associated with oxidative stress and protein turnover.

It localises to the plastid. The protein resides in the chloroplast. The enzyme catalyses 2 (2R)-3-phosphoglycerate + 2 H(+) = D-ribulose 1,5-bisphosphate + CO2 + H2O. It carries out the reaction D-ribulose 1,5-bisphosphate + O2 = 2-phosphoglycolate + (2R)-3-phosphoglycerate + 2 H(+). In terms of biological role, ruBisCO catalyzes two reactions: the carboxylation of D-ribulose 1,5-bisphosphate, the primary event in carbon dioxide fixation, as well as the oxidative fragmentation of the pentose substrate in the photorespiration process. Both reactions occur simultaneously and in competition at the same active site. This chain is Ribulose bisphosphate carboxylase large chain, found in Euglena gracilis.